The sequence spans 149 residues: Arginine repressor (149 aa).

Belongs to the ArgR family.

Its subcellular location is the cytoplasm. It functions in the pathway amino-acid biosynthesis; L-arginine biosynthesis [regulation]. Functionally, regulates arginine biosynthesis genes. This chain is Arginine repressor, found in Geobacillus thermodenitrificans (strain NG80-2).